Here is a 150-residue protein sequence, read N- to C-terminus: MKVIFTQDVKGKGKGKKGEVKEVPVGYANNFLLKKNYAVEATPGNLKQLELQKKRAKQERQQEIEDAKALKETLSNIEVEVSAKTGEGGKLFGSVSTKQIAEALKAQHDIKIDKRKMDLPNGIHSLGYTNVPVKLDKEVEGTIRVHTVEQ.

Belongs to the bacterial ribosomal protein bL9 family.

Binds to the 23S rRNA. The chain is Large ribosomal subunit protein bL9 from Staphylococcus aureus (strain NCTC 8325 / PS 47).